We begin with the raw amino-acid sequence, 395 residues long: RNA demethylase ALKBH5 (395 aa).

Disordered regions lie at residues 1 to 28 (MAAASGYTDLREKLKSMTSRDNYKAGSR) and 47 to 83 (AAEPYPASGTTKRKYQEDSDPERSDYEEHQLQKEEEA). At alanine 2 the chain carries N-acetylalanine. A Glycyl lysine isopeptide (Lys-Gly) (interchain with G-Cter in ubiquitin) cross-link involves residue lysine 58. The segment covering 60–83 (KYQEDSDPERSDYEEHQLQKEEEA) has biased composition (basic and acidic residues). Residues serine 65 and serine 70 each carry the phosphoserine modification. Positions 68-117 (ERSDYEEHQLQKEEEARKVKSGIRQIRLFSQDECSKIEARIDEVVSRAEK) form a coiled coil. Tyrosine 72 is modified (phosphotyrosine). A Glycyl lysine isopeptide (Lys-Gly) (interchain with G-Cter in SUMO1) cross-link involves residue lysine 87. Serine 88 carries the phosphoserine modification. Lysine 133 is modified (N6-acetyllysine). Tyrosine 140 is an active-site residue. 2-oxoglutarate-binding residues include asparagine 194, tyrosine 196, and histidine 205. Cysteine 231 and cysteine 268 form a disulfide bridge. Lysine 236 is modified (N6-acetyllysine). Positions 267 and 278 each coordinate 2-oxoglutarate. The disordered stretch occupies residues 294 to 395 (ETKSLSSSTL…PTRKVKMRRH (102 aa)). A compositionally biased stretch (low complexity) spans 296–306 (KSLSSSTLPPS). Lysine 322 participates in a covalent cross-link: Glycyl lysine isopeptide (Lys-Gly) (interchain with G-Cter in SUMO1). Serine 326 is subject to Phosphoserine. Lysine 329 is covalently cross-linked (Glycyl lysine isopeptide (Lys-Gly) (interchain with G-Cter in SUMO2)). Basic and acidic residues predominate over residues 329 to 350 (KADPDAAHRPRILEMDKEENRR). At arginine 360 the chain carries Omega-N-methylarginine. Residues serine 362, serine 372, serine 375, and serine 385 each carry the phosphoserine modification.

The protein belongs to the alkB family. Monomer. Interacts with RBM33; promoting desumoylation by SENP1 and recruitment to N(6)-methyladenosine-containing mRNAs. Interacts (when acetylated by KAT8) with PSPC1; interaction facilitates recognition of N(6)-methyladenosine (m6A) mRNA. The cofactor is Fe(2+). In terms of processing, phosphorylated at Ser-88 and Ser-326 in response to reactive oxygen species (ROS), promoting sumoylation and inactivation. Post-translationally, acetylated by KAT8 at Lys-236, promoting interaction with PSPC1, thereby facilitating recognition of N(6)-methyladenosine (m6A) mRNA by ALKBH5. Deacetylated at Lys-236 by HDAC7. Sumoylated at Lys-87 and Lys-322 by PIAS4 following phosphorylation at Ser-88 and Ser-326 in response to reactive oxygen species (ROS), inhibiting the RNA demethylase activity. Desumoylated by SENP1; relieving RNA demethylase inhibition, leading to N(6)-methyladenosine-containing mRNAs demethylation. In terms of processing, ubiquitinated at Lys-58 via 'Lys-48'-linked polyubiquitin chain, leading to its degradation by the proteasome. Deubiquitinated at Lys-58 by USP9X, promoting its stabilizazion. In terms of tissue distribution, widely expressed, with highest expression in testis. In testis, present in almost all testicular cell types except elongating and elongated spermatids (at protein level). Among spermatogenic cells, present at high level in spermatocytes; medium levels in spermatogonia and lower levels in round spermatids (at protein level).

It is found in the nucleus speckle. The catalysed reaction is an N(6)-methyladenosine in mRNA + 2-oxoglutarate + O2 = an adenosine in mRNA + formaldehyde + succinate + CO2. RNA demethylase activity is inhibited following sumoylation. Inhibition is relieved following desumoylation. Inhibited by histone demethylase inhibitor IOX1. Functionally, dioxygenase that specifically demethylates N(6)-methyladenosine (m6A) RNA, the most prevalent internal modification of messenger RNA (mRNA) in higher eukaryotes. Demethylates RNA by oxidative demethylation, which requires molecular oxygen, alpha-ketoglutarate and iron. Demethylation of m6A mRNA affects mRNA processing, translation and export. Can also demethylate N(6)-methyladenosine in single-stranded DNA (in vitro). Required for the late meiotic and haploid phases of spermatogenesis by mediating m6A demethylation in spermatocytes and round spermatids: m6A demethylation of target transcripts is required for correct splicing and the production of longer 3'-UTR mRNAs in male germ cells. Involved in paraspeckle assembly, a nuclear membraneless organelle, by undergoing liquid-liquid phase separation. Paraspeckle assembly is coupled with m6A demethylation of RNAs, such as NEAT1 non-coding RNA. Also acts as a negative regulator of T-cell development: inhibits gamma-delta T-cell proliferation via demethylation of JAG1 and NOTCH2 transcripts. Inhibits regulatory T-cell (Treg) recruitment by mediating demethylation and destabilization of CCL28 mRNAs. The chain is RNA demethylase ALKBH5 from Mus musculus (Mouse).